We begin with the raw amino-acid sequence, 292 residues long: Elongation factor Ts (292 aa).

The segment at 80 to 83 (TDFV) is involved in Mg(2+) ion dislocation from EF-Tu.

The protein belongs to the EF-Ts family.

The protein localises to the cytoplasm. Its function is as follows. Associates with the EF-Tu.GDP complex and induces the exchange of GDP to GTP. It remains bound to the aminoacyl-tRNA.EF-Tu.GTP complex up to the GTP hydrolysis stage on the ribosome. This Mycoplasmopsis synoviae (strain 53) (Mycoplasma synoviae) protein is Elongation factor Ts.